Here is a 447-residue protein sequence, read N- to C-terminus: Na(+)-translocating NADH-quinone reductase subunit A (447 aa).

Belongs to the NqrA family. In terms of assembly, composed of six subunits; NqrA, NqrB, NqrC, NqrD, NqrE and NqrF.

It carries out the reaction a ubiquinone + n Na(+)(in) + NADH + H(+) = a ubiquinol + n Na(+)(out) + NAD(+). Functionally, NQR complex catalyzes the reduction of ubiquinone-1 to ubiquinol by two successive reactions, coupled with the transport of Na(+) ions from the cytoplasm to the periplasm. NqrA to NqrE are probably involved in the second step, the conversion of ubisemiquinone to ubiquinol. The polypeptide is Na(+)-translocating NADH-quinone reductase subunit A (Yersinia pseudotuberculosis serotype O:1b (strain IP 31758)).